A 365-amino-acid polypeptide reads, in one-letter code: MFLKHLTIQNFRNHEELSLDFDSRLIFFVGDNGEGKTNLLEAICILSWLKSFRESEDSNLIRWGSENYFLRGKIKNNLKESVLEIGFTSKPSVKRKLKFNQEEIKKRTDLIGKFITVLLTPMDLKIIEGGPAERRKFIDAFISSFDPFYLEFLLEYNKILKHRNALLKSGNLDISHLSIWDKKIVEKGIFILNKRREVVLELNSFYRVNLDKLSGGKDGLELIYKPNVKDQDEFLEKLNRNLSRDLRLGYTSVGIHRDDLFIGTDQRDITEFGSQGQKRSTVIALKAATFNYYKDILNTIPVLLIDDVIRELDVKRREYFVDLVVTAGQAFFTTTDLEGIQDYVGKLKDQKQIFLIRQGKVEPIK.

30–37 is an ATP binding site; it reads GDNGEGKT.

Belongs to the RecF family.

The protein localises to the cytoplasm. In terms of biological role, the RecF protein is involved in DNA metabolism; it is required for DNA replication and normal SOS inducibility. RecF binds preferentially to single-stranded, linear DNA. It also seems to bind ATP. The protein is DNA replication and repair protein RecF of Leptospira interrogans serogroup Icterohaemorrhagiae serovar copenhageni (strain Fiocruz L1-130).